Consider the following 137-residue polypeptide: Peptide methionine sulfoxide reductase MsrB (137 aa).

The MsrB domain occupies 7–129 (PGELKNGLSE…NSASLSFTDE (123 aa)). Residues Cys46, Cys49, Cys95, and Cys98 each contribute to the Zn(2+) site. The active-site Nucleophile is Cys118.

This sequence belongs to the MsrB Met sulfoxide reductase family. It depends on Zn(2+) as a cofactor.

The enzyme catalyses L-methionyl-[protein] + [thioredoxin]-disulfide + H2O = L-methionyl-(R)-S-oxide-[protein] + [thioredoxin]-dithiol. This Klebsiella pneumoniae (strain 342) protein is Peptide methionine sulfoxide reductase MsrB.